Consider the following 368-residue polypeptide: p21-activated protein kinase-interacting protein 1-like (368 aa).

WD repeat units follow at residues 45–82 (AHTASLNAVSSSNQFIATGSKDETIQLYDMCKKTEHGA), 85–123 (HHDGTISCLEFYGTSHLLSGGQDGLICVWSTKKWECLKT), 126–165 (AHKGQVTSLSVHPSGKLALSVGTDKTLRTWNLIEGRSAFI), 207–245 (AFTKRISCLKFLKNSLLAVGGDDESVRIYDVTSQKCVCE), and 248–289 (AHEN…IESP).

It is found in the nucleus. The protein localises to the nucleolus. Its function is as follows. Negatively regulates the PAK1 kinase. PAK1 is a member of the PAK kinase family, which has been shown to play a positive role in the regulation of signaling pathways involving MAPK8 and RELA. PAK1 exists as an inactive homodimer, which is activated by binding of small GTPases such as CDC42 to an N-terminal regulatory domain. PAK1IP1 also binds to the N-terminus of PAK1, and inhibits the specific activation of PAK1 by CDC42. May be involved in ribosomal large subunit assembly. This Danio rerio (Zebrafish) protein is p21-activated protein kinase-interacting protein 1-like (pak1ip1).